The sequence spans 303 residues: GTPase Era (303 aa).

An Era-type G domain is found at 8 to 176 (YCGFIAIVGR…ASIVRKHMPE (169 aa)). Residues 16–23 (GRPNVGKS) are G1. 16–23 (GRPNVGKS) is a binding site for GTP. Residues 42 to 46 (QTTRH) form a G2 region. The G3 stretch occupies residues 63-66 (DTPG). Residues 63–67 (DTPGL) and 125–128 (NKVD) contribute to the GTP site. Positions 125-128 (NKVD) are G4. Residues 155 to 157 (ISA) are G5. Residues 207–284 (LGEELPYSVT…HLELWVKVKS (78 aa)) enclose the KH type-2 domain.

The protein belongs to the TRAFAC class TrmE-Era-EngA-EngB-Septin-like GTPase superfamily. Era GTPase family. As to quaternary structure, monomer.

The protein localises to the cytoplasm. It is found in the cell inner membrane. Its function is as follows. An essential GTPase that binds both GDP and GTP, with rapid nucleotide exchange. Plays a role in 16S rRNA processing and 30S ribosomal subunit biogenesis and possibly also in cell cycle regulation and energy metabolism. The polypeptide is GTPase Era (Yersinia pseudotuberculosis serotype O:1b (strain IP 31758)).